Here is a 30-residue protein sequence, read N- to C-terminus: Cycloviolacin-H4 (30 aa).

A cross-link (cyclopeptide (Gly-Asn)) is located at residues 1–30 (GIPCAESCVWIPCTVTALLGCSCSNNVCYN). Disulfide bonds link C4/C21, C8/C23, and C13/C28.

This is a cyclic peptide.

Functionally, probably participates in a plant defense mechanism. Has potent hemolytic activity. The chain is Cycloviolacin-H4 from Viola hederacea (Australian violet).